The following is a 1082-amino-acid chain: MSSINTNVAEKHSYKERVNTDASSLSADGSVEAHRLTIEQVAKIFNTDIINGLSTSQANQTLKDFGANTLGDGDKISLTKIIAHQVCNAMILVLIISMVIALAIKDWISGGVIGFVVLINISVGFVQEYKAEKTMGSLRSLSSPTARVTRNGDDTTIPAEEVVPGDIVHIKVGDTVPADLRLIDLMNLETDEALLTGESLPITKNHLDVYDDYSVPIPVGDRLNLAYSSSVVSKGRGTGIVIATALDTQIGQIAKSLRNNNSVIRKVDKSNGKPKKREYSKAFCGTIKDIFYNILGINVGTPLQRKLSWLAIFLFWGCRYFCNYCNGIPKNRVNKEVAIYAICVALSMIPSALIVVLTITMAVGAQVMVMKHVIVRKLDSLEALGGINDICSDKTGTLTQGKMIARKTWIPNVGTFNVGNSNDPFNPKAGEVSFVNLSPKFIEETDEEIDFKQKLPSPFPENFNNWLLTATLANIATLNQSRDEETGELVWKAHGDATEIAIQVFTSRLNYGRDSLIENYEHLAEFPFDSSIKRMSAVYQSLQTNQIKVYTKGAVERVLNCCTHWYGHEENDELYDNQQLKELTDDDKHLIESNMNALSTQGLRVLAFATKDITNSSIDLSNRESIESNLIFQGLIGIYDPPRPETAGSVKSCHNAGINVHMLTGDHPGTAKAIAQEVGILPHNLYHYSEEVVKAMCMTANEFDSLSDDEIDKLPVLPLVIARCAPQTKVRMIEALHRRGKFVAMTGDGVNDSPSLKKADVGIAMGLNGSDVAKDASDIVLTDDNFASILNAIEEGRRMSSNIQKFVLQLLAENVAQALYLMVGLAFIDDSGLSVFPLSPVEVLWILVVTSCFPAMDLGQERASDDILEESPNSTIFTWEVIIDMIVYGFWMAVCCLVCFVIIVYGEGDPYLGVNCNKSSSSNSDVCELVFRGRSASFATMTWCALILAWECIHPYNSLFYMRQDTDHPWWKQTVIDLWDNQFLFWSVAIGFISVFPVVYIPVINTKVFLHGPIGYEWGLAVGFSILFLAGSELWKWIKRIHKRKANKKAKNPEYELERSDPFKKYASFSRSNTMDRPELMV.

The Cytoplasmic segment spans residues 1–75 (MSSINTNVAE…GANTLGDGDK (75 aa)). The helical transmembrane segment at 76-96 (ISLTKIIAHQVCNAMILVLII) threads the bilayer. The Extracellular segment spans residues 97 to 98 (SM). The helical transmembrane segment at 99-119 (VIALAIKDWISGGVIGFVVLI) threads the bilayer. Residues 120 to 308 (NISVGFVQEY…VGTPLQRKLS (189 aa)) lie on the Cytoplasmic side of the membrane. A helical transmembrane segment spans residues 309 to 329 (WLAIFLFWGCRYFCNYCNGIP). The Extracellular segment spans residues 330-336 (KNRVNKE). Residues 337–357 (VAIYAICVALSMIPSALIVVL) traverse the membrane as a helical segment. The Cytoplasmic portion of the chain corresponds to 358 to 807 (TITMAVGAQV…RMSSNIQKFV (450 aa)). The active-site 4-aspartylphosphate intermediate is Asp-393. Mg(2+) contacts are provided by Asp-393 and Thr-395. ATP contacts are provided by Thr-395, Glu-499, Lys-552, Arg-604, Thr-664, Gly-665, Asp-666, Arg-723, and Lys-729. Residue Asp-748 coordinates Mg(2+). Asn-751 is an ATP binding site. A helical transmembrane segment spans residues 808–828 (LQLLAENVAQALYLMVGLAFI). The Extracellular segment spans residues 829 to 832 (DDSG). Residues 833–853 (LSVFPLSPVEVLWILVVTSCF) form a helical membrane-spanning segment. Residues 854-884 (PAMDLGQERASDDILEESPNSTIFTWEVIID) are Cytoplasmic-facing. The chain crosses the membrane as a helical span at residues 885-905 (MIVYGFWMAVCCLVCFVIIVY). Topologically, residues 906 to 935 (GEGDPYLGVNCNKSSSSNSDVCELVFRGRS) are extracellular. A helical transmembrane segment spans residues 936–956 (ASFATMTWCALILAWECIHPY). At 957–983 (NSLFYMRQDTDHPWWKQTVIDLWDNQF) the chain is on the cytoplasmic side. The chain crosses the membrane as a helical span at residues 984–1004 (LFWSVAIGFISVFPVVYIPVI). The Extracellular portion of the chain corresponds to 1005-1007 (NTK). A helical transmembrane segment spans residues 1008–1028 (VFLHGPIGYEWGLAVGFSILF). Topologically, residues 1029-1082 (LAGSELWKWIKRIHKRKANKKAKNPEYELERSDPFKKYASFSRSNTMDRPELMV) are cytoplasmic.

It belongs to the cation transport ATPase (P-type) (TC 3.A.3) family. Type IID subfamily. It depends on Mg(2+) as a cofactor. In terms of processing, the active site is phosphorylated in presence of sodium or potassium and in conditions of higher pH. Not phosphorylated in presence of calcium ions.

It is found in the cell membrane. It catalyses the reaction Na(+)(in) + ATP + H2O = Na(+)(out) + ADP + phosphate + H(+). It carries out the reaction K(+)(in) + ATP + H2O = K(+)(out) + ADP + phosphate + H(+). Functionally, catalyzes the hydrolysis of ATP coupled with the export of sodium and potassium from the cell. May be an inefficient sodium exporter. May transport other cations such as lithium. Sodium/potassium efflux ATPases are involved in salt tolerance and maintaining the membrane potential across the plasma membrane in high salinity (Na+) or alkaline (K+) environments. The sequence is that of Sodium/potassium exporting P-type ATPase 2 from Schwanniomyces occidentalis (Yeast).